The primary structure comprises 621 residues: DnaJ homolog subfamily C member 2 (621 aa).

Met1 carries the N-acetylmethionine modification. A phosphoserine mark is found at Ser47, Ser49, Ser60, and Ser63. A J domain is found at 88 to 161 (DHYAVLGLGH…VKRRAFNSVD (74 aa)). A ZRF1-UBD region spans residues 160 to 250 (VDPTFDNSVP…RDERRWIEKQ (91 aa)). The residue at position 183 (Ser183) is a Phosphoserine. Disordered regions lie at residues 294–315 (EKKA…QRQA) and 427–453 (EEAE…GSKN). SANT domains lie at 449–511 (NGSK…KLDP) and 549–604 (TDFT…EMVK).

Component of ribosome-associated complex (RAC), a heterodimer composed of Hsp70/DnaK-type chaperone HSPA14 and Hsp40/DnaJ-type chaperone DNAJC2. Interacts (via ZRF1-UBD region) with ID1. Phosphorylated in M (mitotic) phase.

Its subcellular location is the nucleus. The protein localises to the cytoplasm. The protein resides in the cytosol. Functionally, acts both as a chaperone in the cytosol and as a chromatin regulator in the nucleus. When cytosolic, acts as a molecular chaperone: component of the ribosome-associated complex (RAC), a complex involved in folding or maintaining nascent polypeptides in a folding-competent state. In the RAC complex, stimulates the ATPase activity of the ribosome-associated pool of Hsp70-type chaperones HSPA14 that bind to the nascent polypeptide chain. When nuclear, mediates the switching from polycomb-repressed genes to an active state: specifically recruited at histone H2A ubiquitinated at 'Lys-119' (H2AK119ub), and promotes the displacement of the polycomb PRC1 complex from chromatin, thereby facilitating transcription activation. The polypeptide is DnaJ homolog subfamily C member 2 (DNAJC2) (Macaca fascicularis (Crab-eating macaque)).